Here is a 732-residue protein sequence, read N- to C-terminus: Catalase-peroxidase (732 aa).

The segment at residues 96-219 is a cross-link (tryptophyl-tyrosyl-methioninium (Trp-Tyr) (with M-245)); it reads WHSAGTYRIG…LGAVQMGLIY (124 aa). His-97 serves as the catalytic Proton acceptor. The tryptophyl-tyrosyl-methioninium (Tyr-Met) (with W-96) cross-link spans 219-245; sequence YVNPEGPNGHPDPVASGRDIRETFGRM. Residue His-260 participates in heme b binding.

It belongs to the peroxidase family. Peroxidase/catalase subfamily. In terms of assembly, homodimer or homotetramer. It depends on heme b as a cofactor. In terms of processing, formation of the three residue Trp-Tyr-Met cross-link is important for the catalase, but not the peroxidase activity of the enzyme.

The enzyme catalyses H2O2 + AH2 = A + 2 H2O. It catalyses the reaction 2 H2O2 = O2 + 2 H2O. Bifunctional enzyme with both catalase and broad-spectrum peroxidase activity. The sequence is that of Catalase-peroxidase from Acaryochloris marina (strain MBIC 11017).